The following is a 593-amino-acid chain: MRSFSQLWPTLKRLLAYGSPWRKPLGIAVLMMWVAAAAEVSGPLLISYFIDNMVAKNNLPLKVVAGLAAAYVGLQLFAAGLHYAQSLLFNRAAVGVVQQLRTDVMDAALRQPLSEFDTQPVGQVISRVTNDTEVIRDLYVTVVATVLRSAALVGAMLVAMFSLDWRMALVAIMIFPVVLVVMVIYQRYSTPIVRRVRAYLADINDGFNEIINGMSVIQQFRQQARFGERMGEASRSHYMARMQTLRLDGFLLRPLLSLFSSLILCGLLMLFGFSASGTIEVGVLYAFISYLGRLNEPLIELTTQQAMLQQAVVAGERVFELMDGPRQQYGNDDRPLQSGTIEVDNVSFAYRDDNLVLKNINLSVPSRNFVALVGHTGSGKSTLASLLMGYYPLTEGEIRLDGRPLSSLSHSALRQGVAMVQQDPVVLADTFLANVTLGRDISEERVWQALETVQLAELARSMSDGIYTPLGEQGNNLSVGQKQLLALARVLVETPQILILDEATASIDSGTEQAIQHALAAVREHTTLVVIAHRLSTIVDADTILVLHRGQAVEQGTHQQLLAAQGRYWQMYQLQLAGEELAASVREEESLSA.

Residues 1 to 25 (MRSFSQLWPTLKRLLAYGSPWRKPL) lie on the Cytoplasmic side of the membrane. Residues 25–310 (LGIAVLMMWV…LTTQQAMLQQ (286 aa)) form the ABC transmembrane type-1 domain. The helical transmembrane segment at 26 to 46 (GIAVLMMWVAAAAEVSGPLLI) threads the bilayer. Over 47–62 (SYFIDNMVAKNNLPLK) the chain is Periplasmic. The helical transmembrane segment at 63-83 (VVAGLAAAYVGLQLFAAGLHY) threads the bilayer. The Cytoplasmic segment spans residues 84–140 (AQSLLFNRAAVGVVQQLRTDVMDAALRQPLSEFDTQPVGQVISRVTNDTEVIRDLYV). Residues 141-161 (TVVATVLRSAALVGAMLVAMF) form a helical membrane-spanning segment. The Periplasmic portion of the chain corresponds to 162–164 (SLD). The chain crosses the membrane as a helical span at residues 165–185 (WRMALVAIMIFPVVLVVMVIY). Topologically, residues 186–254 (QRYSTPIVRR…LRLDGFLLRP (69 aa)) are cytoplasmic. The helical transmembrane segment at 255–275 (LLSLFSSLILCGLLMLFGFSA) threads the bilayer. Over 276–278 (SGT) the chain is Periplasmic. The helical transmembrane segment at 279-299 (IEVGVLYAFISYLGRLNEPLI) threads the bilayer. Over 300–593 (ELTTQQAMLQ…SVREEESLSA (294 aa)) the chain is Cytoplasmic. One can recognise an ABC transporter domain in the interval 341 to 574 (IEVDNVSFAY…QGRYWQMYQL (234 aa)). 374 to 381 (GHTGSGKS) serves as a coordination point for ATP.

It belongs to the ABC transporter superfamily. Drug exporter-2 (TC 3.A.1.117) family.

The protein resides in the cell inner membrane. It carries out the reaction ATP + H2O + xenobioticSide 1 = ADP + phosphate + xenobioticSide 2.. This Escherichia coli O6:H1 (strain CFT073 / ATCC 700928 / UPEC) protein is Multidrug resistance-like ATP-binding protein MdlB (mdlB).